Reading from the N-terminus, the 475-residue chain is Ribulose bisphosphate carboxylase large chain (475 aa).

A propeptide spanning residues 1 to 2 is cleaved from the precursor; it reads MS. Pro-3 bears the N-acetylproline mark. N6,N6,N6-trimethyllysine is present on Lys-14. Substrate-binding residues include Asn-123 and Thr-173. The active-site Proton acceptor is Lys-175. Lys-177 serves as a coordination point for substrate. Residues Lys-201, Asp-203, and Glu-204 each coordinate Mg(2+). Lys-201 carries the N6-carboxylysine modification. His-294 (proton acceptor) is an active-site residue. Residues His-327 and Ser-379 each coordinate substrate.

It belongs to the RuBisCO large chain family. Type I subfamily. In terms of assembly, heterohexadecamer of 8 large chains and 8 small chains; disulfide-linked. The disulfide link is formed within the large subunit homodimers. Mg(2+) serves as cofactor. The disulfide bond which can form in the large chain dimeric partners within the hexadecamer appears to be associated with oxidative stress and protein turnover.

It is found in the plastid. The protein localises to the chloroplast. The enzyme catalyses 2 (2R)-3-phosphoglycerate + 2 H(+) = D-ribulose 1,5-bisphosphate + CO2 + H2O. The catalysed reaction is D-ribulose 1,5-bisphosphate + O2 = 2-phosphoglycolate + (2R)-3-phosphoglycerate + 2 H(+). Its function is as follows. RuBisCO catalyzes two reactions: the carboxylation of D-ribulose 1,5-bisphosphate, the primary event in carbon dioxide fixation, as well as the oxidative fragmentation of the pentose substrate in the photorespiration process. Both reactions occur simultaneously and in competition at the same active site. The sequence is that of Ribulose bisphosphate carboxylase large chain from Amaranthus hypochondriacus (Prince-of-Wales feather).